We begin with the raw amino-acid sequence, 149 residues long: MESLYRVPFTVLECPNLKLKKPSWLHMPSAMTVYAMVVVSYFLITGGIIYDVIVEPPSVGSMTDEHGHQRPVAFLAYRVNGQYIMEGLASSFLFTMGGLGFIILDRSNTPNIPKLNRFLLLFIGFVCVLLSFFMARVFMRMKLPGYLMG.

At 1-32 the chain is on the cytoplasmic side; it reads MESLYRVPFTVLECPNLKLKKPSWLHMPSAMT. The helical transmembrane segment at 33–53 threads the bilayer; the sequence is VYAMVVVSYFLITGGIIYDVI. Residues 54–83 lie on the Extracellular side of the membrane; that stretch reads VEPPSVGSMTDEHGHQRPVAFLAYRVNGQY. The helical transmembrane segment at 84-104 threads the bilayer; the sequence is IMEGLASSFLFTMGGLGFIIL. Over 105-117 the chain is Cytoplasmic; sequence DRSNTPNIPKLNR. Residues 118–138 form a helical membrane-spanning segment; that stretch reads FLLLFIGFVCVLLSFFMARVF. At 139–149 the chain is on the extracellular side; sequence MRMKLPGYLMG.

It belongs to the OSTC family. As to quaternary structure, specific component of the STT3A-containing form of the oligosaccharyltransferase (OST) complex.

It localises to the membrane. It functions in the pathway protein modification; protein glycosylation. Specific component of the STT3A-containing form of the oligosaccharyl transferase (OST) complex that catalyzes the initial transfer of a defined glycan (Glc(3)Man(9)GlcNAc(2) in eukaryotes) from the lipid carrier dolichol-pyrophosphate to an asparagine residue within an Asn-X-Ser/Thr consensus motif in nascent polypeptide chains, the first step in protein N-glycosylation. N-glycosylation occurs cotranslationally and the complex associates with the Sec61 complex at the channel-forming translocon complex that mediates protein translocation across the endoplasmic reticulum (ER). All subunits are required for a maximal enzyme activity. The polypeptide is Oligosaccharyltransferase complex subunit ostc-A (Xenopus laevis (African clawed frog)).